We begin with the raw amino-acid sequence, 182 residues long: UPF0397 protein SAG1634 (182 aa).

The next 5 membrane-spanning stretches (helical) occupy residues 9-29 (VVATGIGAALFIIIGMLVNIP), 42-62 (AVLALFAVIYGPGVGFFTGFI), 74-94 (SPWWTWVLVSGLLGLMIGFFA), 109-129 (LLLFNVVQVIANLIGWSVVAP), and 148-168 (FLSSLVNSITIGVGGTLLLLA).

The protein belongs to the UPF0397 family.

The protein resides in the cell membrane. In Streptococcus agalactiae serotype V (strain ATCC BAA-611 / 2603 V/R), this protein is UPF0397 protein SAG1634.